A 231-amino-acid polypeptide reads, in one-letter code: Lipoprotein-releasing system ATP-binding protein LolD (231 aa).

Positions 6–231 (LQVQAVSKSY…YLQAVAEHAQ (226 aa)) constitute an ABC transporter domain. 42–49 (GTSGSGKS) provides a ligand contact to ATP.

It belongs to the ABC transporter superfamily. Lipoprotein translocase (TC 3.A.1.125) family. As to quaternary structure, the complex is composed of two ATP-binding proteins (LolD) and two transmembrane proteins (LolC and LolE).

It is found in the cell inner membrane. Functionally, part of the ABC transporter complex LolCDE involved in the translocation of mature outer membrane-directed lipoproteins, from the inner membrane to the periplasmic chaperone, LolA. Responsible for the formation of the LolA-lipoprotein complex in an ATP-dependent manner. This chain is Lipoprotein-releasing system ATP-binding protein LolD, found in Shewanella sp. (strain MR-4).